A 208-amino-acid chain; its full sequence is Uracil phosphoribosyltransferase (208 aa).

5-phospho-alpha-D-ribose 1-diphosphate-binding positions include Arg-78, Arg-103, and 130-138 (DPMLATGGS). Residues Ile-193 and 198–200 (GDA) contribute to the uracil site. Residue Asp-199 participates in 5-phospho-alpha-D-ribose 1-diphosphate binding.

It belongs to the UPRTase family. Mg(2+) serves as cofactor.

It carries out the reaction UMP + diphosphate = 5-phospho-alpha-D-ribose 1-diphosphate + uracil. Its pathway is pyrimidine metabolism; UMP biosynthesis via salvage pathway; UMP from uracil: step 1/1. Allosterically activated by GTP. Catalyzes the conversion of uracil and 5-phospho-alpha-D-ribose 1-diphosphate (PRPP) to UMP and diphosphate. This Roseiflexus sp. (strain RS-1) protein is Uracil phosphoribosyltransferase.